Here is a 256-residue protein sequence, read N- to C-terminus: H-2 class II histocompatibility antigen, A-B alpha chain (256 aa).

Positions 1–23 are cleaved as a signal peptide; sequence MPRSRALILGVLALTTMLSLCGG. Residues 24–111 form an alpha-1 region; it reads EDDIEADHVG…KRSNSTPATN (88 aa). Over 24–218 the chain is Extracellular; the sequence is EDDIEADHVG…IPAPMSELTE (195 aa). Residues 112-205 form an alpha-2 region; the sequence is EAPQATVFPK…GLEEPVLKHW (94 aa). The Ig-like C1-type domain occupies 114-206; the sequence is PQATVFPKSP…LEEPVLKHWE (93 aa). Cys134 and Cys190 are joined by a disulfide. Asn145 carries N-linked (GlcNAc...) asparagine glycosylation. The tract at residues 206 to 218 is connecting peptide; that stretch reads EPEIPAPMSELTE. A helical transmembrane segment spans residues 219 to 244; sequence TVVCALGLSVGLVGIVVGTIFIIQGL. Residues 245 to 256 lie on the Cytoplasmic side of the membrane; sequence RSGGTSRHPGPL.

Belongs to the MHC class II family.

It is found in the membrane. In Mus musculus (Mouse), this protein is H-2 class II histocompatibility antigen, A-B alpha chain (H2-Aa).